A 336-amino-acid polypeptide reads, in one-letter code: Large ribosomal subunit protein uL1m (336 aa).

Residues 1-50 (MAAAVRCLRRVLIHHQRHCLCKMASQASLYPCSVNSLLHNRHFAAAAAAA) constitute a mitochondrion transit peptide. The residue at position 85 (Ser85) is a Phosphoserine.

It belongs to the universal ribosomal protein uL1 family.

The protein localises to the mitochondrion. The protein is Large ribosomal subunit protein uL1m (Mrpl1) of Mus musculus (Mouse).